Reading from the N-terminus, the 333-residue chain is DNA-directed RNA polymerase subunit alpha (333 aa).

Residues 1-234 (MQISVNEFLT…QQLAAFVDLK (234 aa)) are alpha N-terminal domain (alpha-NTD). The alpha C-terminal domain (alpha-CTD) stretch occupies residues 248-333 (IDPILLRPVD…SLKKDDKATA (86 aa)).

Belongs to the RNA polymerase alpha chain family. In terms of assembly, homodimer. The RNAP catalytic core consists of 2 alpha, 1 beta, 1 beta' and 1 omega subunit. When a sigma factor is associated with the core the holoenzyme is formed, which can initiate transcription.

The enzyme catalyses RNA(n) + a ribonucleoside 5'-triphosphate = RNA(n+1) + diphosphate. Its function is as follows. DNA-dependent RNA polymerase catalyzes the transcription of DNA into RNA using the four ribonucleoside triphosphates as substrates. This is DNA-directed RNA polymerase subunit alpha from Pseudomonas syringae pv. tomato (strain ATCC BAA-871 / DC3000).